Consider the following 1199-residue polypeptide: MAGHLVNYGKHRTRRSYARIKEVLDLPNLIKIQTNSYQWFLDEGLKEMFDDIMPIDDFQGKLSLEFVGYQLLEPKYTVEEARQHDANYSAPLHVTLRLTNHETGEIKSQDVFFGDFPLMTKQGTFIINGAERVIVSQLVRSPGVYFHSETDKNSRVTYGTTVIPNRGAWLEYETDAKDIAYVRIDRTRKIPLTELVRALGFGSDQDIINMFGDNDSLMLTLEKDVHKNTDDSRTDEALKDIYERLRPGEPKTADSSRSLLYARFFDPKRYDLASVGRYKVNKKLSLKTRLLNQVLAETLADPDTGEVIAQKGTKVDRQVMDKLAPYLDRDDFKTITYQPSDQGVVTDPIELQSIKVYSQVTPDKEINLIGNGHIGKKVKHIVPADVLASMNYFLNLQEGLGSIDDIDHLGNRRIRSVGELLQNQFRIGLSRMERVVRERMSIQDTATVTPQQLINIRPVVASIKEFFGSSQLSQFMDQTNPLGELTHKRRLSALGPGGLTRDRAGYEVRDVHYTHYGRMCPIETPEGPNIGLINSLASYAVVNPYGFIETPYRRVSWDTHKVTDKIDYLTADEEDNYIVAQANSPLNDDGSFVDETVLARHKDNNIEISPDKVDYMDVSPKQVVAVATACIPFLENDDSNRALMGANMQRQAVPLVNPHAPLVGTGMEYKAAHDSGTAVLANNAGTVEYVDAKQIRVRREDGALDAYNLMKFKRSNAGKNYNQRPIVTIGDHVDVDEIIADGPAMQNGELALGQNPIIAFMTWNMYNYEDAIVLSERLVKDDVYTSIHIEEYESEARDTKLGPEEVTREIPNVGEEALKDLDEFGVVRVGAEVRDGDILVGKVTPKGVTELSAEERLLHAIFGEKAREVRDTSLRVPHGGGGIIQDVKIFTREAGDELSPGVNMMVRVYITQKRKIQVGDKMAGRHGNKGTVSVVVPEEDMPYLPDGTPVDICLSPMGVPSRMNIGQVLELHLGMAARNLGIHVATPVFDGANDKDLWATVKEAGMASDGKSVLYDGRTGEPFENRVSVGIMYYMKLSHMVDDKIHARSIGPYSLVTQQPLGGKAQFGGQRFGEMEVWALEAYGAAYTLQEILTYKSDDVVGRVKTYEAIVKGEPIPKPGVPESFRVLVKELQALGLDMKVLGADKKEIELRDMDDDEDDIVSVDALAKFAAQQEEKKAHEAAAQATDGKSANSTDDKK.

A disordered region spans residues 1175-1199; sequence EEKKAHEAAAQATDGKSANSTDDKK. The span at 1188–1199 shows a compositional bias: polar residues; the sequence is DGKSANSTDDKK.

The protein belongs to the RNA polymerase beta chain family. As to quaternary structure, the RNAP catalytic core consists of 2 alpha, 1 beta, 1 beta' and 1 omega subunit. When a sigma factor is associated with the core the holoenzyme is formed, which can initiate transcription.

The enzyme catalyses RNA(n) + a ribonucleoside 5'-triphosphate = RNA(n+1) + diphosphate. Its function is as follows. DNA-dependent RNA polymerase catalyzes the transcription of DNA into RNA using the four ribonucleoside triphosphates as substrates. The sequence is that of DNA-directed RNA polymerase subunit beta from Lacticaseibacillus casei (strain BL23) (Lactobacillus casei).